A 711-amino-acid polypeptide reads, in one-letter code: Progesterone receptor (711 aa).

Positions 1-347 (MEDKSKQCLQ…YGFDALPRKI (347 aa)) are modulating, Pro-Rich. 2 consecutive NR C4-type zinc fingers follow at residues 348–368 (CLIC…CGSC) and 384–408 (CAGR…LKKC). A DNA-binding region (nuclear receptor) is located at residues 348-420 (CLICSDEASG…AGMVLGGRKF (73 aa)). In terms of domain architecture, NR LBD spans 457–691 (QEVQYFPELL…EFPEMMTEVI (235 aa)).

The protein belongs to the nuclear hormone receptor family. NR3 subfamily. Expressed in all tissues examined: highly expressed in testis and brain. Also expressed in heart, lung, liver, kidney, stomach and small intestine.

Its subcellular location is the nucleus. Functionally, the steroid hormones and their receptors are involved in the regulation of eukaryotic gene expression and affect cellular proliferation and differentiation in target tissues. The chain is Progesterone receptor (pgr) from Rana dybowskii (Dybovsky's frog).